The sequence spans 334 residues: Ferric enterobactin transport system permease protein FepD (334 aa).

The Periplasmic portion of the chain corresponds to 1-9 (MSGSVAVTR). Residues 10–30 (AIAVPGLLLLLIIATALSLLI) form a helical membrane-spanning segment. The Cytoplasmic portion of the chain corresponds to 31–63 (GAKSLPASVVLEAFSGTCQSADCTIVLDARLPR). Residues 64 to 84 (TLAGLLAGGALGLAGALMQTL) form a helical membrane-spanning segment. Over 85–92 (TRNPLADP) the chain is Periplasmic. Residues 93-113 (GLLGVNAGASFAIVLGAALFG) form a helical membrane-spanning segment. Over 114–120 (YSSAQEQ) the chain is Cytoplasmic. Residues 121-141 (LAMAFAGALVASLIVAFTGSQ) traverse the membrane as a helical segment. The Periplasmic segment spans residues 142-151 (GGGQLSPVRL). A helical membrane pass occupies residues 152-172 (TLAGVALAAVLEGLTSGIALL). At 173–192 (NPDVYDQLRFWQAGSLDIRN) the chain is on the cytoplasmic side. The helical transmembrane segment at 193–213 (LHTLKVVLIPVLIAGATALLL) threads the bilayer. The Periplasmic portion of the chain corresponds to 214–241 (SRALNSLSLGSDTATALGSRVARTQLIG). A helical transmembrane segment spans residues 242-262 (LLAITVLCGSATAIVGPIAFI). The Cytoplasmic portion of the chain corresponds to 263-279 (GLMMPHMARWLVGADHR). A helical transmembrane segment spans residues 280 to 300 (WSLPVTLLATPALLLFADIIG). Residues 301–305 (RVIVP) are Periplasmic-facing. A helical membrane pass occupies residues 306–326 (GELRVSVVSAFIGAPVLIFLV). The Cytoplasmic segment spans residues 327-334 (RRKTRGGA).

The protein belongs to the binding-protein-dependent transport system permease family. FecCD subfamily. In terms of assembly, the complex is composed of two ATP-binding proteins (FepC), two transmembrane proteins (FepD and FepG) and a solute-binding protein (FepB).

The protein resides in the cell inner membrane. Part of the ABC transporter complex FepBDGC involved in ferric enterobactin uptake. Responsible for the translocation of the substrate across the membrane. The polypeptide is Ferric enterobactin transport system permease protein FepD (fepD) (Escherichia coli (strain K12)).